The primary structure comprises 237 residues: DNA repair protein RecO (237 aa).

Belongs to the RecO family.

In terms of biological role, involved in DNA repair and RecF pathway recombination. This Flavobacterium johnsoniae (strain ATCC 17061 / DSM 2064 / JCM 8514 / BCRC 14874 / CCUG 350202 / NBRC 14942 / NCIMB 11054 / UW101) (Cytophaga johnsonae) protein is DNA repair protein RecO.